A 343-amino-acid polypeptide reads, in one-letter code: Tumor necrosis factor receptor superfamily member wgn (343 aa).

2 disordered regions span residues 1 to 44 and 74 to 96; these read MMPP…IGGS and SSAA…SIAS. The signal sequence occupies residues 1–76; the sequence is MMPPRLPGGH…ATSASSSSSA (76 aa). Residues 13 to 24 show a composition bias toward low complexity; it reads AMRSRSSSSGHH. The segment covering 29–39 has biased composition (basic residues); the sequence is FHKRRRRRQQH. At 77-201 the chain is on the extracellular side; sequence ANTDIAPPDP…AAWVLDWQTG (125 aa). The stretch at 99–137 is one TNFR-Cys repeat; it reads PCAPQHWWDSQRDRCTPCTRCQGEMIPLRPCQLHTDTIC. 3 disulfide bridges follow: C100–C113, C116–C129, and C119–C137. A helical membrane pass occupies residues 202 to 222; sequence VLYVAVLTCLVFFSVAACILI. The Cytoplasmic portion of the chain corresponds to 223 to 343; that stretch reads HHMRQWRRME…GVRGCSGLKG (121 aa). The stretch at 225 to 257 forms a coiled coil; it reads MRQWRRMERRLDQDVEELSTKLMAKLAEVQSLD.

In terms of assembly, monomer. Interacts (via extracellular cystein-rich domain) with egr (via secreted TNF-homology soluble form); forms heterohexamers when 3 copies associate with egr trimers. Interacts with Traf6. Interacts with Moe. In terms of tissue distribution, expressed in the adult midgut; under normal conditions expressed at higher levels than the other TNF receptor grnd.

It is found in the cell membrane. Its subcellular location is the cytoplasmic vesicle membrane. In terms of biological role, receptor for egr. Involved in induction of apoptosis by triggering JNK signaling. Mediates the tumor suppressor activity of egr which eliminates oncogenic cells from epithelia, thereby maintaining epithelial integrity. Following UV-induced epidermal damage, binds to egr released from apoptotic epidermal cells and plays a role in development of thermal allodynia, a responsiveness to subthreshold thermal stimuli which are not normally perceived as noxious. Together with Moe, involved in control of axon targeting of R8 and R2-R5 photoreceptors, independent of egr. The sequence is that of Tumor necrosis factor receptor superfamily member wgn from Drosophila melanogaster (Fruit fly).